We begin with the raw amino-acid sequence, 513 residues long: Activin receptor type-2B (513 aa).

An N-terminal signal peptide occupies residues 1–18 (MTAPWAALALLWGSLCAG). The Extracellular portion of the chain corresponds to 19-137 (SGRGEAETRE…PPPTAPTLLT (119 aa)). Intrachain disulfides connect Cys29/Cys59, Cys49/Cys77, Cys84/Cys103, Cys90/Cys102, and Cys104/Cys109. Asn42 and Asn65 each carry an N-linked (GlcNAc...) asparagine glycan. A helical membrane pass occupies residues 138-158 (VLAYSLLPIGGLSLIVLLAFW). Over 159–513 (MYRHRKPPYG…VDLLPKESSI (355 aa)) the chain is Cytoplasmic. Positions 190 to 481 (LQLLEIKARG…AGCVEERVSL (292 aa)) constitute a Protein kinase domain. ATP contacts are provided by residues 196-204 (KARGRFGCV) and Lys217. Catalysis depends on Asp322, which acts as the Proton acceptor. Residues 492-513 (DCLVSLVTSVTNVDLLPKESSI) are interaction with DYNLT1.

It belongs to the protein kinase superfamily. TKL Ser/Thr protein kinase family. TGFB receptor subfamily. As to quaternary structure, forms an activin receptor complex with activin type II receptors such as ACVR1B. Interacts with VPS39. Interacts with DYNLT1. Interacts with BMP3. Interacts with BMP2. The cofactor is Mg(2+). Requires Mn(2+) as cofactor. Post-translationally, phosphorylated. Constitutive phosphorylation is in part catalyzed by its own kinase activity.

Its subcellular location is the cell membrane. It catalyses the reaction L-threonyl-[receptor-protein] + ATP = O-phospho-L-threonyl-[receptor-protein] + ADP + H(+). The catalysed reaction is L-seryl-[receptor-protein] + ATP = O-phospho-L-seryl-[receptor-protein] + ADP + H(+). Transmembrane serine/threonine kinase activin type-2 receptor forming an activin receptor complex with activin type-1 serine/threonine kinase receptors (ACVR1, ACVR1B or ACVR1c). Transduces the activin signal from the cell surface to the cytoplasm and is thus regulating many physiological and pathological processes including neuronal differentiation and neuronal survival, hair follicle development and cycling, FSH production by the pituitary gland, wound healing, extracellular matrix production, immunosuppression and carcinogenesis. Activin is also thought to have a paracrine or autocrine role in follicular development in the ovary. Within the receptor complex, the type-2 receptors act as a primary activin receptors (binds activin-A/INHBA, activin-B/INHBB as well as inhibin-A/INHA-INHBA). The type-1 receptors like ACVR1B act as downstream transducers of activin signals. Activin binds to type-2 receptor at the plasma membrane and activates its serine-threonine kinase. The activated receptor type-2 then phosphorylates and activates the type-1 receptor. Once activated, the type-1 receptor binds and phosphorylates the SMAD proteins SMAD2 and SMAD3, on serine residues of the C-terminal tail. Soon after their association with the activin receptor and subsequent phosphorylation, SMAD2 and SMAD3 are released into the cytoplasm where they interact with the common partner SMAD4. This SMAD complex translocates into the nucleus where it mediates activin-induced transcription. Inhibitory SMAD7, which is recruited to ACVR1B through FKBP1A, can prevent the association of SMAD2 and SMAD3 with the activin receptor complex, thereby blocking the activin signal. Activin signal transduction is also antagonized by the binding to the receptor of inhibin-B via the IGSF1 inhibin coreceptor. This is Activin receptor type-2B (Acvr2b) from Rattus norvegicus (Rat).